The chain runs to 843 residues: Elongation factor 2 (843 aa).

The tr-type G domain occupies 17 to 253; the sequence is HNIRNMSVIA…LWGENFFDPA (237 aa). Position 26-33 (26-33) interacts with GTP; sequence AHVDHGKS. 2 positions are modified to phosphothreonine: Thr57 and Thr59. 158-161 lines the GTP pocket; the sequence is NKMD. The residue at position 700 (His700) is a Diphthamide.

The protein belongs to the TRAFAC class translation factor GTPase superfamily. Classic translation factor GTPase family. EF-G/EF-2 subfamily. In terms of processing, phosphorylation by EF-2 kinase completely inactivates EF-2.

The protein localises to the cytoplasm. The catalysed reaction is GTP + H2O = GDP + phosphate + H(+). Its function is as follows. Catalyzes the GTP-dependent ribosomal translocation step during translation elongation. During this step, the ribosome changes from the pre-translocational (PRE) to the post-translocational (POST) state as the newly formed A-site-bound peptidyl-tRNA and P-site-bound deacylated tRNA move to the P and E sites, respectively. Catalyzes the coordinated movement of the two tRNA molecules, the mRNA and conformational changes in the ribosome. This is Elongation factor 2 from Beta vulgaris (Sugar beet).